Here is a 136-residue protein sequence, read N- to C-terminus: Large ribosomal subunit protein uL16 (136 aa).

Belongs to the universal ribosomal protein uL16 family. In terms of assembly, part of the 50S ribosomal subunit.

Binds 23S rRNA and is also seen to make contacts with the A and possibly P site tRNAs. The chain is Large ribosomal subunit protein uL16 from Shewanella pealeana (strain ATCC 700345 / ANG-SQ1).